Consider the following 266-residue polypeptide: Nickel import ATP-binding protein NikE (266 aa).

The ABC transporter domain occupies 4-252; sequence ISADNIVKIY…RHPASRLLRE (249 aa). Position 45–52 (45–52) interacts with ATP; it reads GRSGCGKS.

The protein belongs to the ABC transporter superfamily. Nickel importer (TC 3.A.1.5.3) family. In terms of assembly, the complex is composed of two ATP-binding proteins (NikD and NikE), two transmembrane proteins (NikB and NikC) and a solute-binding protein (NikA).

The protein localises to the cell inner membrane. It catalyses the reaction Ni(2+)(out) + ATP + H2O = Ni(2+)(in) + ADP + phosphate + H(+). Its function is as follows. Part of the ABC transporter complex NikABCDE involved in nickel import. Responsible for energy coupling to the transport system. This Brucella suis biovar 1 (strain 1330) protein is Nickel import ATP-binding protein NikE.